Consider the following 339-residue polypeptide: Ribosomal RNA small subunit methyltransferase C (339 aa).

Belongs to the methyltransferase superfamily. RsmC family. Monomer.

It localises to the cytoplasm. It carries out the reaction guanosine(1207) in 16S rRNA + S-adenosyl-L-methionine = N(2)-methylguanosine(1207) in 16S rRNA + S-adenosyl-L-homocysteine + H(+). Functionally, specifically methylates the guanine in position 1207 of 16S rRNA in the 30S particle. This chain is Ribosomal RNA small subunit methyltransferase C, found in Photobacterium profundum (strain SS9).